The primary structure comprises 262 residues: Transmembrane protein 106A (262 aa).

Residues 95-115 (FVFLAVLICLVTSSFIVFFLF) form a helical membrane-spanning segment.

The protein belongs to the TMEM106 family. In terms of tissue distribution, expressed in renal cells (at protein level). Expressed in epithelial cells.

Its subcellular location is the cell membrane. In terms of biological role, activates macrophages and polarizes them into M1-like macrophages through the activation of the MAPK and NF-kappaB signaling pathway. Upon activation, up-regulates the expression of CD80, CD86, CD69 and MHC II on macrophages, and induces the release of pro-inflammatory cytokines such as TNF, IL1B, IL6, CCL2 and nitric oxide. May play a role in inhibition of proliferation and migration. In Homo sapiens (Human), this protein is Transmembrane protein 106A (TMEM106A).